A 342-amino-acid chain; its full sequence is Ribosomal RNA small subunit methyltransferase C (342 aa).

It belongs to the methyltransferase superfamily. RsmC family. In terms of assembly, monomer.

It is found in the cytoplasm. It catalyses the reaction guanosine(1207) in 16S rRNA + S-adenosyl-L-methionine = N(2)-methylguanosine(1207) in 16S rRNA + S-adenosyl-L-homocysteine + H(+). Functionally, specifically methylates the guanine in position 1207 of 16S rRNA in the 30S particle. This Salmonella newport (strain SL254) protein is Ribosomal RNA small subunit methyltransferase C.